A 208-amino-acid polypeptide reads, in one-letter code: UPF0301 protein MAB_4928c (208 aa).

This sequence belongs to the UPF0301 (AlgH) family.

In Mycobacteroides abscessus (strain ATCC 19977 / DSM 44196 / CCUG 20993 / CIP 104536 / JCM 13569 / NCTC 13031 / TMC 1543 / L948) (Mycobacterium abscessus), this protein is UPF0301 protein MAB_4928c.